The sequence spans 235 residues: Large ribosomal subunit protein uL1 (235 aa).

The protein belongs to the universal ribosomal protein uL1 family. In terms of assembly, part of the 50S ribosomal subunit.

Its function is as follows. Binds directly to 23S rRNA. The L1 stalk is quite mobile in the ribosome, and is involved in E site tRNA release. In terms of biological role, protein L1 is also a translational repressor protein, it controls the translation of the L11 operon by binding to its mRNA. This is Large ribosomal subunit protein uL1 from Prochlorococcus marinus (strain MIT 9303).